Reading from the N-terminus, the 238-residue chain is Sugar fermentation stimulation protein homolog (238 aa).

The protein belongs to the SfsA family.

The polypeptide is Sugar fermentation stimulation protein homolog (Actinobacillus succinogenes (strain ATCC 55618 / DSM 22257 / CCUG 43843 / 130Z)).